Reading from the N-terminus, the 120-residue chain is UPF0344 protein LMHCC_0278 (120 aa).

Helical transmembrane passes span 3 to 23, 33 to 53, 62 to 82, and 92 to 112; these read GYIHLISWVAIVVLTVTALLI, MLQMINRVFYILVILSGIMMV, ILAIFKILMGIIVIGVVEMLL, and GMFLMIFVIVVVITISLGFYL.

This sequence belongs to the UPF0344 family.

It localises to the cell membrane. The protein is UPF0344 protein LMHCC_0278 of Listeria monocytogenes serotype 4a (strain HCC23).